Consider the following 89-residue polypeptide: uncharacterized protein (89 aa).

The chain crosses the membrane as a helical span at residues 20–39 (SFAMTTYLNLFVKLLIFLYI).

The protein localises to the membrane. This is an uncharacterized protein from Escherichia coli (strain K12).